A 309-amino-acid chain; its full sequence is Glutaminase (309 aa).

Residues Ser64, Asn114, Glu160, Asn167, Tyr191, Tyr243, and Val261 each contribute to the substrate site.

This sequence belongs to the glutaminase family. As to quaternary structure, homotetramer.

It catalyses the reaction L-glutamine + H2O = L-glutamate + NH4(+). In Rhizobium rhizogenes (strain K84 / ATCC BAA-868) (Agrobacterium radiobacter), this protein is Glutaminase.